The following is a 69-amino-acid chain: MKNMDEERKYGLYSLIIGLLCVIGIVMLNGLICYVLYIIAVPSLLYGIGAFIIPKTRRKDAGKLPFRGY.

2 consecutive transmembrane segments (helical) span residues 15-35 (LIIG…ICYV) and 36-56 (LYII…IPKT).

Its subcellular location is the cell membrane. This is an uncharacterized protein from Methanocaldococcus jannaschii (strain ATCC 43067 / DSM 2661 / JAL-1 / JCM 10045 / NBRC 100440) (Methanococcus jannaschii).